A 589-amino-acid chain; its full sequence is Aspartate--tRNA ligase (589 aa).

An L-aspartate-binding site is contributed by E175. Residues 199 to 202 (QLFK) form an aspartate region. R221 provides a ligand contact to L-aspartate. Residues 221 to 223 (RDE) and Q230 contribute to the ATP site. H449 contacts L-aspartate. E483 contacts ATP. Position 490 (R490) interacts with L-aspartate. 535–538 (GLDR) is an ATP binding site.

Belongs to the class-II aminoacyl-tRNA synthetase family. Type 1 subfamily. Homodimer.

The protein localises to the cytoplasm. It catalyses the reaction tRNA(Asp) + L-aspartate + ATP = L-aspartyl-tRNA(Asp) + AMP + diphosphate. Catalyzes the attachment of L-aspartate to tRNA(Asp) in a two-step reaction: L-aspartate is first activated by ATP to form Asp-AMP and then transferred to the acceptor end of tRNA(Asp). The chain is Aspartate--tRNA ligase from Lysinibacillus sphaericus (strain C3-41).